We begin with the raw amino-acid sequence, 77 residues long: MSTVEERVKKIVCEQLGVKEGDVQLTSKFVEDLGADSLDTVELVMALEEEFETEIPDEEAEKITTVQDAIDYILANQ.

Positions 2–77 constitute a Carrier domain; the sequence is STVEERVKKI…DAIDYILANQ (76 aa). At Ser-37 the chain carries O-(pantetheine 4'-phosphoryl)serine.

This sequence belongs to the acyl carrier protein (ACP) family. In terms of processing, 4'-phosphopantetheine is transferred from CoA to a specific serine of apo-ACP by AcpS. This modification is essential for activity because fatty acids are bound in thioester linkage to the sulfhydryl of the prosthetic group.

It is found in the cytoplasm. Its pathway is lipid metabolism; fatty acid biosynthesis. Carrier of the growing fatty acid chain in fatty acid biosynthesis. The sequence is that of Acyl carrier protein from Hahella chejuensis (strain KCTC 2396).